The following is a 258-amino-acid chain: MAKRLDLTDVNIYYGSFHAVADVSLAILPRSVTALIGPSGCGKTTVLRTLNRMHEVIPGARVEGAVLLDDQDIYAPGIDPVGVRRAIGMVFQRPNPFPAMSIRNNVVAGLKLQGVRNRKVLDDTAESSLRGANLWDEVKDRLDKPGGGLSGGQQQRLCIARAIAVQPDVLLMDEPCSSLDPISTMAIEDLISELKQQYTIVIVTHNMQQAARVSDQTAFFNLEAVGKPGRLVEIASTEKIFSNPNQKATEDYISGRFG.

The ABC transporter domain occupies 5 to 247; sequence LDLTDVNIYY…EKIFSNPNQK (243 aa). 37–44 lines the ATP pocket; that stretch reads GPSGCGKT.

This sequence belongs to the ABC transporter superfamily. Phosphate importer (TC 3.A.1.7) family. In terms of assembly, the complex is composed of two ATP-binding proteins (PstB), two transmembrane proteins (PstC and PstA) and a solute-binding protein (PstS).

The protein resides in the cell membrane. The enzyme catalyses phosphate(out) + ATP + H2O = ADP + 2 phosphate(in) + H(+). Functionally, part of the ABC transporter complex PstSACB involved in phosphate import. Responsible for energy coupling to the transport system. This chain is Phosphate import ATP-binding protein PstB 1, found in Mycobacterium bovis (strain ATCC BAA-935 / AF2122/97).